Reading from the N-terminus, the 419-residue chain is Histidine--tRNA ligase (419 aa).

It belongs to the class-II aminoacyl-tRNA synthetase family.

It localises to the cytoplasm. It carries out the reaction tRNA(His) + L-histidine + ATP = L-histidyl-tRNA(His) + AMP + diphosphate + H(+). The chain is Histidine--tRNA ligase from Pyrobaculum aerophilum (strain ATCC 51768 / DSM 7523 / JCM 9630 / CIP 104966 / NBRC 100827 / IM2).